A 343-amino-acid chain; its full sequence is Ferrochelatase (343 aa).

Fe cation contacts are provided by His211 and Glu292.

It belongs to the ferrochelatase family.

The protein localises to the cytoplasm. It catalyses the reaction heme b + 2 H(+) = protoporphyrin IX + Fe(2+). The protein operates within porphyrin-containing compound metabolism; protoheme biosynthesis; protoheme from protoporphyrin-IX: step 1/1. In terms of biological role, catalyzes the ferrous insertion into protoporphyrin IX. This is Ferrochelatase from Gluconobacter oxydans (strain 621H) (Gluconobacter suboxydans).